The following is a 156-amino-acid chain: Transcriptional repressor NrdR (156 aa).

A zinc finger spans residues 3–34 (CPFCGNIDTQVKDSRPAEDHVSIRRRRFCPAC). An ATP-cone domain is found at 49–139 (LVVIKTSGKR…VYKNFQAADD (91 aa)).

The protein belongs to the NrdR family. Requires Zn(2+) as cofactor.

Its function is as follows. Negatively regulates transcription of bacterial ribonucleotide reductase nrd genes and operons by binding to NrdR-boxes. This chain is Transcriptional repressor NrdR, found in Ruegeria pomeroyi (strain ATCC 700808 / DSM 15171 / DSS-3) (Silicibacter pomeroyi).